A 261-amino-acid chain; its full sequence is Cytochrome c oxidase subunit 3 (261 aa).

Residues 1-15 lie on the Mitochondrial matrix side of the membrane; sequence MTHQTHAYHMVNPSP. A helical membrane pass occupies residues 16 to 34; it reads WPLTGALSALLMTSGLVMW. The Mitochondrial intermembrane portion of the chain corresponds to 35 to 40; sequence FHYHST. The chain crosses the membrane as a helical span at residues 41–66; sequence ILVLLGLLTNILTMYQWWRDVVREGT. Topologically, residues 67-72 are mitochondrial matrix; it reads FQGHHT. Residues 73–105 traverse the membrane as a helical segment; that stretch reads PTVQKGLRYGMVLFIISEVFFFAGFFWAFYHSS. At 106–128 the chain is on the mitochondrial intermembrane side; that stretch reads LAPTPELGGCWPPTGIHPLDPME. Residues 129–152 form a helical membrane-spanning segment; that stretch reads VPLLNTSVLLASGVTITWAHHSLM. Topologically, residues 153-155 are mitochondrial matrix; the sequence is EGN. Residues 156–183 traverse the membrane as a helical segment; sequence RKQMLQALFITISLGIYFTLLQASEYHE. Residues 184–190 are Mitochondrial intermembrane-facing; the sequence is ASFSISD. A helical membrane pass occupies residues 191–223; sequence GIYGSTFFMATGFHGLHVIIGSTFLAVCFLRQL. Over 224–232 the chain is Mitochondrial matrix; sequence KFHFTSNHH. The chain crosses the membrane as a helical span at residues 233–256; that stretch reads FGFEAAAWYWHFVDVVWLFLYVSI. Residues 257-261 are Mitochondrial intermembrane-facing; it reads YWWGS.

Belongs to the cytochrome c oxidase subunit 3 family. As to quaternary structure, component of the cytochrome c oxidase (complex IV, CIV), a multisubunit enzyme composed of 14 subunits. The complex is composed of a catalytic core of 3 subunits MT-CO1, MT-CO2 and MT-CO3, encoded in the mitochondrial DNA, and 11 supernumerary subunits COX4I, COX5A, COX5B, COX6A, COX6B, COX6C, COX7A, COX7B, COX7C, COX8 and NDUFA4, which are encoded in the nuclear genome. The complex exists as a monomer or a dimer and forms supercomplexes (SCs) in the inner mitochondrial membrane with NADH-ubiquinone oxidoreductase (complex I, CI) and ubiquinol-cytochrome c oxidoreductase (cytochrome b-c1 complex, complex III, CIII), resulting in different assemblies (supercomplex SCI(1)III(2)IV(1) and megacomplex MCI(2)III(2)IV(2)).

It is found in the mitochondrion inner membrane. The catalysed reaction is 4 Fe(II)-[cytochrome c] + O2 + 8 H(+)(in) = 4 Fe(III)-[cytochrome c] + 2 H2O + 4 H(+)(out). Its function is as follows. Component of the cytochrome c oxidase, the last enzyme in the mitochondrial electron transport chain which drives oxidative phosphorylation. The respiratory chain contains 3 multisubunit complexes succinate dehydrogenase (complex II, CII), ubiquinol-cytochrome c oxidoreductase (cytochrome b-c1 complex, complex III, CIII) and cytochrome c oxidase (complex IV, CIV), that cooperate to transfer electrons derived from NADH and succinate to molecular oxygen, creating an electrochemical gradient over the inner membrane that drives transmembrane transport and the ATP synthase. Cytochrome c oxidase is the component of the respiratory chain that catalyzes the reduction of oxygen to water. Electrons originating from reduced cytochrome c in the intermembrane space (IMS) are transferred via the dinuclear copper A center (CU(A)) of subunit 2 and heme A of subunit 1 to the active site in subunit 1, a binuclear center (BNC) formed by heme A3 and copper B (CU(B)). The BNC reduces molecular oxygen to 2 water molecules using 4 electrons from cytochrome c in the IMS and 4 protons from the mitochondrial matrix. In Dugong dugon (Dugong), this protein is Cytochrome c oxidase subunit 3 (MT-CO3).